The following is a 1208-amino-acid chain: Chromosome partition protein Smc (1208 aa).

32 to 39 (PNGCGKSN) serves as a coordination point for ATP. Coiled coils occupy residues 170 to 205 (VTKY…GERI), 239 to 504 (EARA…ARVQ), and 694 to 1054 (VIER…QLQD).

The protein belongs to the SMC family. In terms of assembly, homodimer.

Its subcellular location is the cytoplasm. Required for chromosome condensation and partitioning. This Thauera aminoaromatica protein is Chromosome partition protein Smc.